The sequence spans 335 residues: Phosphate acyltransferase (335 aa).

It belongs to the PlsX family. As to quaternary structure, homodimer. Probably interacts with PlsY.

The protein localises to the cytoplasm. It carries out the reaction a fatty acyl-[ACP] + phosphate = an acyl phosphate + holo-[ACP]. It functions in the pathway lipid metabolism; phospholipid metabolism. In terms of biological role, catalyzes the reversible formation of acyl-phosphate (acyl-PO(4)) from acyl-[acyl-carrier-protein] (acyl-ACP). This enzyme utilizes acyl-ACP as fatty acyl donor, but not acyl-CoA. The protein is Phosphate acyltransferase of Streptococcus uberis (strain ATCC BAA-854 / 0140J).